A 244-amino-acid chain; its full sequence is 7-cyano-7-deazaguanine synthase (244 aa).

14–24 (FSGGQDSATCV) serves as a coordination point for ATP. Zn(2+)-binding residues include cysteine 202, cysteine 217, cysteine 220, and cysteine 223.

It belongs to the QueC family. Zn(2+) serves as cofactor.

It carries out the reaction 7-carboxy-7-deazaguanine + NH4(+) + ATP = 7-cyano-7-deazaguanine + ADP + phosphate + H2O + H(+). The protein operates within purine metabolism; 7-cyano-7-deazaguanine biosynthesis. Its function is as follows. Catalyzes the ATP-dependent conversion of 7-carboxy-7-deazaguanine (CDG) to 7-cyano-7-deazaguanine (preQ(0)). This chain is 7-cyano-7-deazaguanine synthase, found in Burkholderia multivorans (strain ATCC 17616 / 249).